Reading from the N-terminus, the 443-residue chain is Thymidine phosphorylase (443 aa).

It belongs to the thymidine/pyrimidine-nucleoside phosphorylase family. Homodimer.

It catalyses the reaction thymidine + phosphate = 2-deoxy-alpha-D-ribose 1-phosphate + thymine. Its pathway is pyrimidine metabolism; dTMP biosynthesis via salvage pathway; dTMP from thymine: step 1/2. In terms of biological role, the enzymes which catalyze the reversible phosphorolysis of pyrimidine nucleosides are involved in the degradation of these compounds and in their utilization as carbon and energy sources, or in the rescue of pyrimidine bases for nucleotide synthesis. The polypeptide is Thymidine phosphorylase (Photobacterium profundum (strain SS9)).